The following is a 157-amino-acid chain: UPF0587 protein C2D10.03c (157 aa).

4 residues coordinate Zn(2+): cysteine 34, cysteine 37, cysteine 68, and cysteine 71.

Belongs to the UPF0587 family.

This Schizosaccharomyces pombe (strain 972 / ATCC 24843) (Fission yeast) protein is UPF0587 protein C2D10.03c.